A 236-amino-acid polypeptide reads, in one-letter code: MRKQFLIAYRGYSSIAPENTKLAFQAAQVFDFDGIWIDIQLTKDKQIVVTHKENFKVSNKNLNLNQINLVDLKKVNLASEFKLKVTSQQIQTLKEVLTQFIQPFKYLLIHIKDDKENNNSLLEQLNLLCKDFVLAKEKMILLSSNFHIIKLINETFKGFKTGFVIANKKALLVASRDELMRYCRFLVPNESFYHKNCKEIQNLGLPVILWVIKGLLRYQFYENDRFVKFQITAQIY.

The region spanning 4 to 236 (QFLIAYRGYS…VKFQITAQIY (233 aa)) is the GP-PDE domain.

It to glycerophosphoryl diester phosphodiesterases (EC 3.1.4.46). This sequence to M.genitalium MG293.

This is an uncharacterized protein from Mycoplasma genitalium (strain ATCC 33530 / DSM 19775 / NCTC 10195 / G37) (Mycoplasmoides genitalium).